Consider the following 177-residue polypeptide: Nucleoside triphosphate/diphosphate phosphatase (177 aa).

Arg23 acts as the Proton donor in catalysis. Mg(2+)-binding residues include Asn87, Asp103, Asp105, Asp107, Asp120, and Glu123.

The protein belongs to the Ntdp family. Requires Mg(2+) as cofactor.

It catalyses the reaction a ribonucleoside 5'-triphosphate + H2O = a ribonucleoside 5'-diphosphate + phosphate + H(+). The catalysed reaction is a ribonucleoside 5'-diphosphate + H2O = a ribonucleoside 5'-phosphate + phosphate + H(+). Its function is as follows. Has nucleoside phosphatase activity towards nucleoside triphosphates and nucleoside diphosphates. This Streptococcus suis (strain 98HAH33) protein is Nucleoside triphosphate/diphosphate phosphatase.